The chain runs to 84 residues: Small ribosomal subunit protein bS16 (84 aa).

This sequence belongs to the bacterial ribosomal protein bS16 family.

The polypeptide is Small ribosomal subunit protein bS16 (Paraburkholderia phytofirmans (strain DSM 17436 / LMG 22146 / PsJN) (Burkholderia phytofirmans)).